Reading from the N-terminus, the 399-residue chain is Glutathione-independent formaldehyde dehydrogenase (399 aa).

Zn(2+) is bound at residue C47. NAD(+) contacts are provided by G48, S49, and H52. The Zn(2+) site is built by H68, C98, C101, C104, C112, and D170. 10 residues coordinate NAD(+): V198, D218, R223, V263, R268, H270, P300, L302, G337, and T339.

It belongs to the zinc-containing alcohol dehydrogenase family. In terms of assembly, homotetramer. It depends on Zn(2+) as a cofactor.

It catalyses the reaction formaldehyde + NAD(+) + H2O = formate + NADH + 2 H(+). It carries out the reaction acetaldehyde + NAD(+) + H2O = acetate + NADH + 2 H(+). The catalysed reaction is 2 formaldehyde + H2O = methanol + formate + H(+). With respect to regulation, inactivated by bipyridine and p-chloromercuribenzoate. Functionally, dehydrogenase that catalyzes the NAD(+)-dependent oxidation of formaldehyde and acetaldehyde, and, to a lesser extent, long-chain alcohols, but is inactive against propionaldehyde, butyraldehyde, methanol and ethanol. Can also catalyze the dismutation of a wide range of aldehydes such as formaldehyde. The chain is Glutathione-independent formaldehyde dehydrogenase from Pseudomonas putida (Arthrobacter siderocapsulatus).